The following is a 487-amino-acid chain: Cytochrome P450 2C5 (487 aa).

Cysteine 432 contacts heme.

This sequence belongs to the cytochrome P450 family. Requires heme as cofactor.

The protein resides in the endoplasmic reticulum membrane. The protein localises to the microsome membrane. It carries out the reaction an organic molecule + reduced [NADPH--hemoprotein reductase] + O2 = an alcohol + oxidized [NADPH--hemoprotein reductase] + H2O + H(+). In terms of biological role, cytochromes P450 are a group of heme-thiolate monooxygenases. In liver microsomes, this enzyme is involved in an NADPH-dependent electron transport pathway. It oxidizes a variety of structurally unrelated compounds, including steroids, fatty acids, and xenobiotics. The polypeptide is Cytochrome P450 2C5 (CYP2C5) (Oryctolagus cuniculus (Rabbit)).